A 482-amino-acid chain; its full sequence is MAATVAVDNLNPKVLKCEYAVRGEIVIHAQRLQEQLKTQPGSLPFDEILYCNIGNPQSLGQQPVTFFREVLALCDHPDLLQREEIKTLFSADSISRAKQILAMIPGRATGAYSHSQGIKGLRDAIASGIASRDGFPANADDIFLTDGASPGVHLMMQLLIRNEKDGILVPIPQYPLYSASIALHGGALVPYYLNESTGWGLETSDVKKQLEDARSRGINVRALVVINPGNPTGQVLAEENQYDIVKFCKNEGLVLLADEVYQENIYVDNKKFHSFKKIVRSLGYGEEDLPLVSYQSVSKGYYGECGKRGGYFEITGFSAPVREQIYKIASVNLCSNITGQILASLVMNPPKASDESYASYKAEKDGILASLARRAKALEHAFNKLEGITCNEAEGAMYVFPQICLPQKAIEAAKAANKAPDAFYALRLLESTGIVVVPGSGFGQVPGTWHFRCTILPQEDKIPAVISRFTVFHEAFMSEYRD.

An N6-(pyridoxal phosphate)lysine modification is found at Lys-299.

The protein belongs to the class-I pyridoxal-phosphate-dependent aminotransferase family. Alanine aminotransferase subfamily. In terms of assembly, homodimer. The cofactor is pyridoxal 5'-phosphate.

It catalyses the reaction L-alanine + 2-oxoglutarate = pyruvate + L-glutamate. It functions in the pathway photosynthesis; C4 acid pathway. It participates in amino-acid degradation; L-alanine degradation via transaminase pathway; pyruvate from L-alanine: step 1/1. Functionally, transfer of C3 units between the cytosol of mesophyll and bundle sheath cells to maintain a nitrogen-carbon balance in the C4-dicarboxylic pathway. The protein is Alanine aminotransferase 2 of Hordeum vulgare (Barley).